Here is a 151-residue protein sequence, read N- to C-terminus: Large ribosomal subunit protein uL22c (151 aa).

The protein belongs to the universal ribosomal protein uL22 family. As to quaternary structure, part of the 50S ribosomal subunit.

It is found in the plastid. It localises to the chloroplast. This protein binds specifically to 23S rRNA. In terms of biological role, the globular domain of the protein is located near the polypeptide exit tunnel on the outside of the subunit, while an extended beta-hairpin is found that lines the wall of the exit tunnel in the center of the 70S ribosome. The protein is Large ribosomal subunit protein uL22c (rpl22) of Gossypium barbadense (Sea Island cotton).